Reading from the N-terminus, the 128-residue chain is RxLR effector protein SFI2 (128 aa).

An N-terminal signal peptide occupies residues 1-22 (MRSAFYIFLVVAVLARCSVVAA). Residues 52–71 (RLLRVAGREDDDATTDEEDR) carry the RxLR-dEER motif.

The protein belongs to the RxLR effector family.

It is found in the secreted. Its subcellular location is the host nucleus. In terms of biological role, effector that suppresses flg22-induced post-translational MAP kinase activation both tomato and Arabidopsis. The perception of highly conserved pathogen- or microbe-associated molecular patterns (PAMPs/MAMPs), such as flg22, triggers converging signaling pathways recruiting MAP kinase cascades and inducing transcriptional re-programming, yielding a generic antimicrobial response. This chain is RxLR effector protein SFI2, found in Phytophthora infestans (strain T30-4) (Potato late blight agent).